The following is a 176-amino-acid chain: Inner membrane-spanning protein YciB (176 aa).

The next 6 membrane-spanning stretches (helical) occupy residues 3 to 23 (FLFD…WGIF), 24 to 44 (TATA…AFRH), 49 to 69 (TMLW…LVLH), 72 to 92 (KFIQ…LLAA), 121 to 141 (VAWA…VHNF), and 149 to 169 (FKLF…SLWL).

This sequence belongs to the YciB family.

The protein resides in the cell inner membrane. In terms of biological role, plays a role in cell envelope biogenesis, maintenance of cell envelope integrity and membrane homeostasis. This Burkholderia orbicola (strain MC0-3) protein is Inner membrane-spanning protein YciB.